The following is a 672-amino-acid chain: Acetoacetyl-CoA synthetase (672 aa).

Belongs to the ATP-dependent AMP-binding enzyme family.

Its subcellular location is the cytoplasm. It is found in the cytosol. The catalysed reaction is acetoacetate + ATP + CoA = acetoacetyl-CoA + AMP + diphosphate. Functionally, converts acetoacetate to acetoacetyl-CoA in the cytosol. Ketone body-utilizing enzyme, responsible for the synthesis of cholesterol and fatty acids. The protein is Acetoacetyl-CoA synthetase (Aacs) of Mus musculus (Mouse).